A 99-amino-acid polypeptide reads, in one-letter code: Large ribosomal subunit protein uL23 (99 aa).

This sequence belongs to the universal ribosomal protein uL23 family. In terms of assembly, part of the 50S ribosomal subunit. Contacts protein L29, and trigger factor when it is bound to the ribosome.

Its function is as follows. One of the early assembly proteins it binds 23S rRNA. One of the proteins that surrounds the polypeptide exit tunnel on the outside of the ribosome. Forms the main docking site for trigger factor binding to the ribosome. The protein is Large ribosomal subunit protein uL23 of Shewanella woodyi (strain ATCC 51908 / MS32).